Consider the following 309-residue polypeptide: METEAEVIPIWQNKPHGSTRSVVRRIGSTLPLKPCPRACFQELPGLPSMRSLDGPLVPTLADIAWIADDEEETYARVRSDTRPLRHEWRPTPLLVMHRNSSVPNFRREGRRVEGLRKPGVTALNRTTALQDELSRLRAQIAKIVAADSDSNPITPDLLSPDDTSMGFSMAPFETAAYQPPPTASFVISDVTEEDEEEEEEEDREEEEEDVSELVPDPMPPVSMTASATFDLDRPTMDFREPEEDTVSLSKSTSFADVMDMLKDMNRLKMSKDRYNRGCTSLREEDSASLISEALRKKFVLKDDDISMRK.

Residues 189-221 (DVTEEDEEEEEEEDREEEEEDVSELVPDPMPPV) are disordered. Positions 190–211 (VTEEDEEEEEEEDREEEEEDVS) are enriched in acidic residues. Ser253 is subject to Phosphoserine.

Belongs to the MTFR1 family.

The protein resides in the mitochondrion outer membrane. In terms of biological role, mitochondrial protein required for adaptation of miochondrial dynamics to metabolic changes. Regulates mitochondrial morphology at steady state and mediates AMPK-dependent stress-induced mitochondrial fragmentation via the control of OPA1 levels. The chain is Mitochondrial fission regulator 1-like (mtfr1l) from Danio rerio (Zebrafish).